A 98-amino-acid chain; its full sequence is UPF0390 protein zgc136864 (98 aa).

The segment covering 1 to 30 (MAQGKQKFKAQRPGGAKKHQNKPKGLKKGG) has biased composition (basic residues). Disordered stretches follow at residues 1-38 (MAQGKQKFKAQRPGGAKKHQNKPKGLKKGGRIIAPKKA) and 63-98 (TQKASTSLHKKLSVLKTPAQKSGTAGAPKPAAGPSK). Residues 83–98 (KSGTAGAPKPAAGPSK) show a composition bias toward low complexity.

This sequence belongs to the UPF0390 family.

The sequence is that of UPF0390 protein zgc136864 from Danio rerio (Zebrafish).